The primary structure comprises 262 residues: Aminoglycoside (3'') (9) adenylyltransferase (262 aa).

The catalysed reaction is streptomycin + ATP = 3''-O-adenylylstreptomycin + diphosphate. It catalyses the reaction spectinomycin + ATP = 9-O-adenylylspectinomycin + diphosphate. Functionally, mediates bacterial resistance to the antibiotics streptomycin and spectinomycin. This is Aminoglycoside (3'') (9) adenylyltransferase from Shigella flexneri.